The following is a 94-amino-acid chain: Pyrimidine/purine nucleoside phosphorylase (94 aa).

It belongs to the nucleoside phosphorylase PpnP family.

The enzyme catalyses a purine D-ribonucleoside + phosphate = a purine nucleobase + alpha-D-ribose 1-phosphate. The catalysed reaction is adenosine + phosphate = alpha-D-ribose 1-phosphate + adenine. It catalyses the reaction cytidine + phosphate = cytosine + alpha-D-ribose 1-phosphate. It carries out the reaction guanosine + phosphate = alpha-D-ribose 1-phosphate + guanine. The enzyme catalyses inosine + phosphate = alpha-D-ribose 1-phosphate + hypoxanthine. The catalysed reaction is thymidine + phosphate = 2-deoxy-alpha-D-ribose 1-phosphate + thymine. It catalyses the reaction uridine + phosphate = alpha-D-ribose 1-phosphate + uracil. It carries out the reaction xanthosine + phosphate = alpha-D-ribose 1-phosphate + xanthine. In terms of biological role, catalyzes the phosphorolysis of diverse nucleosides, yielding D-ribose 1-phosphate and the respective free bases. Can use uridine, adenosine, guanosine, cytidine, thymidine, inosine and xanthosine as substrates. Also catalyzes the reverse reactions. This is Pyrimidine/purine nucleoside phosphorylase from Pseudomonas putida (strain W619).